Here is a 211-residue protein sequence, read N- to C-terminus: Histone H1-beta, late embryonic (211 aa).

Disordered stretches follow at residues 1–22 (MAAEQKKVAKKPRAKPAHPSSS) and 81–211 (KGAS…AAKK). The H15 domain maps to 17–91 (AHPSSSEMVL…GASGSFKLGK (75 aa)). 2 stretches are compositionally biased toward basic and acidic residues: residues 95 to 107 (GKSDAQKAPDAAK) and 114 to 123 (KKKEAKEKKA). 2 stretches are compositionally biased toward basic residues: residues 124-177 (ARSK…KKAA) and 185-211 (KAAKKPAAKKAAKKVAKKPAAKKAAKK).

This sequence belongs to the histone H1/H5 family.

The protein resides in the nucleus. The protein localises to the chromosome. In terms of biological role, histones H1 are necessary for the condensation of nucleosome chains into higher-order structures. This is Histone H1-beta, late embryonic from Strongylocentrotus purpuratus (Purple sea urchin).